The primary structure comprises 136 residues: Large ribosomal subunit protein uL16 (136 aa).

It belongs to the universal ribosomal protein uL16 family. As to quaternary structure, part of the 50S ribosomal subunit.

Functionally, binds 23S rRNA and is also seen to make contacts with the A and possibly P site tRNAs. The polypeptide is Large ribosomal subunit protein uL16 (Aliivibrio fischeri (strain ATCC 700601 / ES114) (Vibrio fischeri)).